The sequence spans 310 residues: MDELIKEFDRYMDLERNLSTHTRKNYLSDLNQFKIYLEENHRVPTELKTEAWQNVDYMMVRAFLGALYRRRVKKVTIARKLASLRAFFKYLHQKRKIQCNPLEAVSTPRTEKYIPAVLSVDEIFVLLNLPFPEDVFGLRDRAILELFYSSGIRVSELTGINEEDMDFSQGLIRIRGKGKKERIVPIGQPASEAVQRYMMKKPGSETSGKAVATCPVPLFVNRRQGRLSARSVARILSKYVSMSGLQKQISPHTLRHSFATHLMDAGADLRSIQELLGHESLSTTQKYTAVSVNRLMAVYDRAHPKARGGH.

The 92-residue stretch at 1 to 92 (MDELIKEFDR…SLRAFFKYLH (92 aa)) folds into the Core-binding (CB) domain. Positions 113–300 (YIPAVLSVDE…SVNRLMAVYD (188 aa)) constitute a Tyr recombinase domain. Active-site residues include Arg153, Lys177, His252, Arg255, and His278. Tyr287 serves as the catalytic O-(3'-phospho-DNA)-tyrosine intermediate.

Belongs to the 'phage' integrase family. XerC subfamily. As to quaternary structure, forms a cyclic heterotetrameric complex composed of two molecules of XerC and two molecules of XerD.

Its subcellular location is the cytoplasm. Functionally, site-specific tyrosine recombinase, which acts by catalyzing the cutting and rejoining of the recombining DNA molecules. The XerC-XerD complex is essential to convert dimers of the bacterial chromosome into monomers to permit their segregation at cell division. It also contributes to the segregational stability of plasmids. In Syntrophus aciditrophicus (strain SB), this protein is Tyrosine recombinase XerC.